The primary structure comprises 379 residues: Cell cycle checkpoint control protein RAD9A (379 aa).

At Tyr-17 the chain carries Phosphotyrosine. The possesses 3'-5' exonuclease activity stretch occupies residues 40–80; it reads FLFAPLFFQQYQAATPGQDLLRCKILMKSFLSVFRSLAMLE. Residues 255–379 are sufficient for interaction with ABL1; that stretch reads SDTDSHSQDL…VLAEDSEGEG (125 aa). Residues 257 to 271 show a composition bias toward basic and acidic residues; the sequence is TDSHSQDLGSPERHQ. Disordered regions lie at residues 257-289 and 308-379; these read TDSH…DFAN and SRVL…EGEG. Residues Ser-261, Ser-266, Ser-317, Ser-330, Ser-363, Ser-368, and Ser-375 each carry the phosphoserine modification.

Belongs to the rad9 family. Component of the toroidal 9-1-1 (RAD9-RAD1-HUS1) complex, composed of RAD9A, RAD1 and HUS1. The 9-1-1 complex associates with LIG1, POLB, FEN1, RAD17, HDAC1, RPA1 and RPA2. The 9-1-1 complex associates with the RAD17-RFC complex. RAD9A interacts with BCL2L1, FEN1, RAD9B, ABL1, RPA1, ATAD5 and RPA2. Interacts with DNAJC7. Interacts (when phosphorylated) with TOPBP1. Constitutively phosphorylated on serine and threonine amino acids in absence of DNA damage. Hyperphosphorylated by PRKCD and ABL1 upon DNA damage. Its phosphorylation by PRKCD may be required for the formation of the 9-1-1 complex. Phosphorylated at Ser-330 and Ser-375 by CK2, promoting interaction with TOPBP1.

It localises to the nucleus. It carries out the reaction Exonucleolytic cleavage in the 3'- to 5'-direction to yield nucleoside 5'-phosphates.. Component of the 9-1-1 cell-cycle checkpoint response complex that plays a major role in DNA repair. The 9-1-1 complex is recruited to DNA lesion upon damage by the RAD17-replication factor C (RFC) clamp loader complex. Acts then as a sliding clamp platform on DNA for several proteins involved in long-patch base excision repair (LP-BER). The 9-1-1 complex stimulates DNA polymerase beta (POLB) activity by increasing its affinity for the 3'-OH end of the primer-template and stabilizes POLB to those sites where LP-BER proceeds; endonuclease FEN1 cleavage activity on substrates with double, nick, or gap flaps of distinct sequences and lengths; and DNA ligase I (LIG1) on long-patch base excision repair substrates. The 9-1-1 complex is necessary for the recruitment of RHNO1 to sites of double-stranded breaks (DSB) occurring during the S phase. RAD9A possesses 3'-&gt;5' double stranded DNA exonuclease activity. The chain is Cell cycle checkpoint control protein RAD9A (RAD9A) from Macaca fascicularis (Crab-eating macaque).